Consider the following 973-residue polypeptide: ATP-dependent DNA helicase Q5 (973 aa).

The Helicase ATP-binding domain occupies 39–213 (MAVVKGDKDV…FAALHLKQPV (175 aa)). ATP is bound at residue 52 to 59 (MPTGAGKS). Residues 157–160 (DEAH) carry the DEAH box motif. Positions 241–398 (NLRDFCLKAL…NKPSDKATLL (158 aa)) constitute a Helicase C-terminal domain. Residues Cys412, Cys428, Cys432, and Cys435 each coordinate Zn(2+). Residues Ser489 and Ser492 each carry the phosphoserine modification. Positions 491 to 621 (GSGDEGRDEA…ASKDGQLYDM (131 aa)) are interaction with POLR2A. Disordered stretches follow at residues 518 to 538 (GKEA…LRDA), 679 to 795 (TEKL…VPGK), and 822 to 884 (CSLE…AREP). At Thr527 the chain carries Phosphothreonine. Residues 653–726 (PKRVGAGFSK…APGSRTNCGD (74 aa)) form an interaction with RAD51 region. Residue Ser728 is modified to Phosphoserine; by CDK1. The span at 840 to 856 (TQAEKRPRPQQESQEKR) shows a compositional bias: basic and acidic residues. A compositionally biased stretch (polar residues) spans 863 to 878 (PSTNSSALASDPSTEN).

It belongs to the helicase family. RecQ subfamily. In terms of assembly, monomer. Interacts with TOP2A, TOP3A and TOP3B. Interacts with RNA polymerase II subunit POLR2A. Identified in a complex with the RNA polymerase II core bound to DNA. Interacts with RAD51. Interacts with WRN; this interaction stimulates WRN helicase activity on DNA fork duplexes. Interacts with MUS1; this interaction promotes MUS81-dependent mitotic DNA synthesis. It depends on Zn(2+) as a cofactor. In terms of processing, phosphorylated by CDK1 at Ser-728; this phosphorylation is required for RECQL5-mediated disruption of RAD51 filaments on stalled replication forks.

It is found in the nucleus. Its subcellular location is the nucleoplasm. The enzyme catalyses Couples ATP hydrolysis with the unwinding of duplex DNA by translocating in the 3'-5' direction.. It carries out the reaction ATP + H2O = ADP + phosphate + H(+). DNA helicase that plays an important role in DNA replication, transcription and repair. Binds to the RNA polymerase II subunit POLR2A during transcription elongation and suppresses transcription-associated genomic instability. Also associates with POLR1A and enforces the stability of ribosomal DNA arrays. Plays an important role in mitotic chromosome separation after cross-over events and cell cycle progress. Mechanistically, removes RAD51 filaments protecting stalled replication forks at common fragile sites and stimulates MUS81-EME1 endonuclease leading to mitotic DNA synthesis. Required for efficient DNA repair, including repair of inter-strand cross-links. Stimulates DNA decatenation mediated by TOP2A. Prevents sister chromatid exchange and homologous recombination. In Rattus norvegicus (Rat), this protein is ATP-dependent DNA helicase Q5 (Recql5).